A 147-amino-acid polypeptide reads, in one-letter code: Elongation factor Tu (147 aa).

The protein belongs to the GTP-binding elongation factor family. EF-Tu/EF-1A subfamily. In terms of assembly, monomer.

The protein localises to the cytoplasm. Functionally, this protein promotes the GTP-dependent binding of aminoacyl-tRNA to the A-site of ribosomes during protein biosynthesis. This Fructilactobacillus sanfranciscensis (Lactobacillus sanfranciscensis) protein is Elongation factor Tu (tuf).